Here is a 218-residue protein sequence, read N- to C-terminus: Large ribosomal subunit protein uL3 (218 aa).

The disordered stretch occupies residues 137 to 157 (GVGASHGAHKNHRKPGSIGGA).

The protein belongs to the universal ribosomal protein uL3 family. As to quaternary structure, part of the 50S ribosomal subunit. Forms a cluster with proteins L14 and L19.

One of the primary rRNA binding proteins, it binds directly near the 3'-end of the 23S rRNA, where it nucleates assembly of the 50S subunit. The sequence is that of Large ribosomal subunit protein uL3 from Kocuria rhizophila (strain ATCC 9341 / DSM 348 / NBRC 103217 / DC2201).